Here is a 377-residue protein sequence, read N- to C-terminus: Succinyl-diaminopimelate desuccinylase (377 aa).

Position 66 (histidine 66) interacts with Zn(2+). Residue aspartate 68 is part of the active site. Aspartate 99 is a binding site for Zn(2+). Glutamate 133 acts as the Proton acceptor in catalysis. The Zn(2+) site is built by glutamate 134, glutamate 162, and histidine 348.

This sequence belongs to the peptidase M20A family. DapE subfamily. As to quaternary structure, homodimer. Zn(2+) is required as a cofactor. It depends on Co(2+) as a cofactor.

The enzyme catalyses N-succinyl-(2S,6S)-2,6-diaminopimelate + H2O = (2S,6S)-2,6-diaminopimelate + succinate. The protein operates within amino-acid biosynthesis; L-lysine biosynthesis via DAP pathway; LL-2,6-diaminopimelate from (S)-tetrahydrodipicolinate (succinylase route): step 3/3. In terms of biological role, catalyzes the hydrolysis of N-succinyl-L,L-diaminopimelic acid (SDAP), forming succinate and LL-2,6-diaminopimelate (DAP), an intermediate involved in the bacterial biosynthesis of lysine and meso-diaminopimelic acid, an essential component of bacterial cell walls. The sequence is that of Succinyl-diaminopimelate desuccinylase from Alcanivorax borkumensis (strain ATCC 700651 / DSM 11573 / NCIMB 13689 / SK2).